We begin with the raw amino-acid sequence, 99 residues long: UPF0235 protein Sbal_3028 (99 aa).

Belongs to the UPF0235 family.

The protein is UPF0235 protein Sbal_3028 of Shewanella baltica (strain OS155 / ATCC BAA-1091).